Consider the following 439-residue polypeptide: GTPase Der (439 aa).

EngA-type G domains lie at 2-168 (ATVL…EEKG) and 181-357 (IKVA…ASYT). Residues 8-15 (GKPNVGKS), 55-59 (DTCGV), 118-121 (NKTE), 187-194 (GRPNVGKS), 234-238 (DTAGL), and 300-303 (NKWD) each bind GTP. Residues 358 to 439 (TKVPSSAINS…PIFLKFKRSR (82 aa)) form the KH-like domain.

The protein belongs to the TRAFAC class TrmE-Era-EngA-EngB-Septin-like GTPase superfamily. EngA (Der) GTPase family. As to quaternary structure, associates with the 50S ribosomal subunit.

GTPase that plays an essential role in the late steps of ribosome biogenesis. The chain is GTPase Der from Thermotoga petrophila (strain ATCC BAA-488 / DSM 13995 / JCM 10881 / RKU-1).